The following is a 176-amino-acid chain: Non-specific lipid transfer protein GPI-anchored 12 (176 aa).

The N-terminal stretch at 1–20 is a signal peptide; the sequence is MLTTNTLAVLLLLFLSLCSG. 4 disulfides stabilise this stretch: C40–C83, C50–C67, C68–C110, and C81–C120. N-linked (GlcNAc...) asparagine glycosylation occurs at N46. N149 carries GPI-anchor amidated asparagine lipidation. Residues 150 to 176 constitute a propeptide, removed in mature form; the sequence is GAMTTKYCGVALNSLALLLLFTFLSLS.

Belongs to the plant LTP family. Preferentially expressed in the endodermis of hypocotyls and roots of seedlings, and in petals and anthers of inflorescences. May also be expressed in siliques, carpels and pedicels.

It localises to the cell membrane. Its function is as follows. Probable lipid transfer protein. The sequence is that of Non-specific lipid transfer protein GPI-anchored 12 from Arabidopsis thaliana (Mouse-ear cress).